We begin with the raw amino-acid sequence, 321 residues long: Ornithine carbamoyltransferase (321 aa).

Carbamoyl phosphate-binding positions include 53–56 (STRT), Q80, R104, and 131–134 (HPCQ). L-ornithine-binding positions include N166, D230, and 234 to 235 (SM). Carbamoyl phosphate contacts are provided by residues 270 to 271 (CL) and R298.

The protein belongs to the aspartate/ornithine carbamoyltransferase superfamily. OTCase family.

It is found in the cytoplasm. It catalyses the reaction carbamoyl phosphate + L-ornithine = L-citrulline + phosphate + H(+). It participates in amino-acid biosynthesis; L-arginine biosynthesis; L-arginine from L-ornithine and carbamoyl phosphate: step 1/3. Functionally, reversibly catalyzes the transfer of the carbamoyl group from carbamoyl phosphate (CP) to the N(epsilon) atom of ornithine (ORN) to produce L-citrulline. The protein is Ornithine carbamoyltransferase of Bifidobacterium longum (strain NCC 2705).